The primary structure comprises 96 residues: UPF0235 protein VV1_1522 (96 aa).

This sequence belongs to the UPF0235 family.

This Vibrio vulnificus (strain CMCP6) protein is UPF0235 protein VV1_1522.